The primary structure comprises 337 residues: DNA-directed RNA polymerase subunit alpha (337 aa).

The alpha N-terminal domain (alpha-NTD) stretch occupies residues 1–223 (MLISQRPALT…ELFGLAQELN (223 aa)). The alpha C-terminal domain (alpha-CTD) stretch occupies residues 238–337 (SEHIAAYSMP…IDTEGEDIAE (100 aa)).

It belongs to the RNA polymerase alpha chain family. As to quaternary structure, homodimer. The RNAP catalytic core consists of 2 alpha, 1 beta, 1 beta' and 1 omega subunit. When a sigma factor is associated with the core the holoenzyme is formed, which can initiate transcription.

The catalysed reaction is RNA(n) + a ribonucleoside 5'-triphosphate = RNA(n+1) + diphosphate. In terms of biological role, DNA-dependent RNA polymerase catalyzes the transcription of DNA into RNA using the four ribonucleoside triphosphates as substrates. The polypeptide is DNA-directed RNA polymerase subunit alpha (Corynebacterium jeikeium (strain K411)).